The chain runs to 461 residues: Tip elongation protein 1 (461 aa).

Residues 22–69 (GEVENRKGVYVGLELLPEFAEFGKNRGVVDGREYFKTKNNEKTGIFVP) form the CAP-Gly domain. Phosphoserine occurs at positions 82, 84, 289, 294, and 305. Residues 134-418 (TEKILQKRIE…RMSPAEFELE (285 aa)) adopt a coiled-coil conformation. Residues 278-303 (KANSSTANEKLSHMESSSPTLTNASF) are compositionally biased toward polar residues. The disordered stretch occupies residues 278 to 323 (KANSSTANEKLSHMESSSPTLTNASFESPKRGKGSNDLPENHPQRR). A Phosphothreonine modification is found at T367. Residues 417–437 (LETTQEVEENDSDSHDDEETW) are disordered.

In terms of assembly, monomer. Interacts with tea1 and tea2. Interacts with tea4 in the presence of tea1.

The protein localises to the cytoplasm. Its subcellular location is the cytoskeleton. Has a role in stabilizing and targeting the growing tips of the microtubules along the long axis of the cell, directing them to the ends of the cell. Acts as a cargo for tea2. This Schizosaccharomyces pombe (strain 972 / ATCC 24843) (Fission yeast) protein is Tip elongation protein 1 (tip1).